The chain runs to 220 residues: Glutamine amidotransferase-like class 1 domain-containing protein 1 (220 aa).

The N-terminal stretch at 1 to 35 (MASERLPSRPACLLVASGAAEGVSAQSFLHCFTLA) is a signal peptide. 2 N-linked (GlcNAc...) asparagine glycosylation sites follow: N57 and N201.

This sequence belongs to the peptidase C56 family. Homotetramer. Component of the FERRY complex composed of five subunits, TBCK, PPP1R21, FERRY3, CRYZL1 and GATD1 with a ratio of 1:2:1:2:4, respectively.

Its subcellular location is the secreted. It is found in the early endosome. Its function is as follows. Component of the FERRY complex (Five-subunit Endosomal Rab5 and RNA/ribosome intermediary). The FERRY complex directly interacts with mRNAs and RAB5A, and functions as a RAB5A effector involved in the localization and the distribution of specific mRNAs most likely by mediating their endosomal transport. The complex recruits mRNAs and ribosomes to early endosomes through direct mRNA-interaction. This chain is Glutamine amidotransferase-like class 1 domain-containing protein 1, found in Bos taurus (Bovine).